A 344-amino-acid chain; its full sequence is tRNA N6-adenosine threonylcarbamoyltransferase (344 aa).

Fe cation is bound by residues His116 and His120. Substrate is bound by residues 138-142 (LVSGG), Asp171, Gly184, Asp188, and Asn277. Asp307 is a Fe cation binding site.

It belongs to the KAE1 / TsaD family. Fe(2+) serves as cofactor.

It is found in the cytoplasm. The enzyme catalyses L-threonylcarbamoyladenylate + adenosine(37) in tRNA = N(6)-L-threonylcarbamoyladenosine(37) in tRNA + AMP + H(+). Required for the formation of a threonylcarbamoyl group on adenosine at position 37 (t(6)A37) in tRNAs that read codons beginning with adenine. Is involved in the transfer of the threonylcarbamoyl moiety of threonylcarbamoyl-AMP (TC-AMP) to the N6 group of A37, together with TsaE and TsaB. TsaD likely plays a direct catalytic role in this reaction. This is tRNA N6-adenosine threonylcarbamoyltransferase from Latilactobacillus sakei subsp. sakei (strain 23K) (Lactobacillus sakei subsp. sakei).